The primary structure comprises 220 residues: Superoxide dismutase [Fe] (220 aa).

The Fe cation site is built by H26, H73, D164, and H168.

Belongs to the iron/manganese superoxide dismutase family. In terms of assembly, homodimer. It depends on Fe cation as a cofactor.

It carries out the reaction 2 superoxide + 2 H(+) = H2O2 + O2. In terms of biological role, destroys superoxide anion radicals which are normally produced within the cells and which are toxic to biological systems. In Campylobacter coli, this protein is Superoxide dismutase [Fe] (sodB).